Here is a 237-residue protein sequence, read N- to C-terminus: Uridylate kinase (237 aa).

Position 9–12 (9–12 (KLSG)) interacts with ATP. An involved in allosteric activation by GTP region spans residues 17-22 (GTQGYG). Gly51 is a UMP binding site. ATP contacts are provided by Gly52 and Arg56. Residues Asp71 and 132-139 (CGNPFFTT) contribute to the UMP site. Thr159, Tyr165, and Asp168 together coordinate ATP.

It belongs to the UMP kinase family. Homohexamer.

It is found in the cytoplasm. The catalysed reaction is UMP + ATP = UDP + ADP. It participates in pyrimidine metabolism; CTP biosynthesis via de novo pathway; UDP from UMP (UMPK route): step 1/1. Its activity is regulated as follows. Allosterically activated by GTP. Inhibited by UTP. Catalyzes the reversible phosphorylation of UMP to UDP. The chain is Uridylate kinase from Parasynechococcus marenigrum (strain WH8102).